The chain runs to 219 residues: Large ribosomal subunit protein mL67 (219 aa).

It belongs to the mitochondrion-specific ribosomal protein mL67 family.

It localises to the nucleus. Its subcellular location is the mitochondrion. In terms of biological role, transcription factor involved in regulation of RNA polymerase II-dependent transcription. Also involved in regulation of mitochondrial DNA recombination, maintenance and repair, and generation of homoplasmic cells. The chain is Large ribosomal subunit protein mL67 (MHR1) from Kluyveromyces lactis (strain ATCC 8585 / CBS 2359 / DSM 70799 / NBRC 1267 / NRRL Y-1140 / WM37) (Yeast).